A 612-amino-acid chain; its full sequence is Elongation factor 4 (612 aa).

The tr-type G domain maps to Ser-12 to Thr-194. GTP contacts are provided by residues Asp-24–Thr-29 and Asn-141–Asp-144.

It belongs to the TRAFAC class translation factor GTPase superfamily. Classic translation factor GTPase family. LepA subfamily.

Its subcellular location is the cell membrane. It carries out the reaction GTP + H2O = GDP + phosphate + H(+). Its function is as follows. Required for accurate and efficient protein synthesis under certain stress conditions. May act as a fidelity factor of the translation reaction, by catalyzing a one-codon backward translocation of tRNAs on improperly translocated ribosomes. Back-translocation proceeds from a post-translocation (POST) complex to a pre-translocation (PRE) complex, thus giving elongation factor G a second chance to translocate the tRNAs correctly. Binds to ribosomes in a GTP-dependent manner. The polypeptide is Elongation factor 4 (Bacillus subtilis (strain 168)).